The sequence spans 698 residues: Glycine--tRNA ligase beta subunit (698 aa).

This sequence belongs to the class-II aminoacyl-tRNA synthetase family. As to quaternary structure, tetramer of two alpha and two beta subunits.

It is found in the cytoplasm. The catalysed reaction is tRNA(Gly) + glycine + ATP = glycyl-tRNA(Gly) + AMP + diphosphate. This is Glycine--tRNA ligase beta subunit from Xanthomonas campestris pv. campestris (strain B100).